We begin with the raw amino-acid sequence, 287 residues long: Undecaprenyl-diphosphatase (287 aa).

The next 7 helical transmembrane spans lie at P50–F70, L97–F117, I131–V151, V160–G180, F206–A226, L234–L254, and W264–Y284.

The protein belongs to the UppP family.

The protein localises to the cell inner membrane. The catalysed reaction is di-trans,octa-cis-undecaprenyl diphosphate + H2O = di-trans,octa-cis-undecaprenyl phosphate + phosphate + H(+). Functionally, catalyzes the dephosphorylation of undecaprenyl diphosphate (UPP). Confers resistance to bacitracin. The sequence is that of Undecaprenyl-diphosphatase from Synechococcus sp. (strain CC9605).